Here is a 136-residue protein sequence, read N- to C-terminus: Large ribosomal subunit protein uL16 (136 aa).

Belongs to the universal ribosomal protein uL16 family. In terms of assembly, part of the 50S ribosomal subunit.

Functionally, binds 23S rRNA and is also seen to make contacts with the A and possibly P site tRNAs. This Orientia tsutsugamushi (strain Ikeda) (Rickettsia tsutsugamushi) protein is Large ribosomal subunit protein uL16.